Reading from the N-terminus, the 272-residue chain is S-adenosylmethionine decarboxylase proenzyme (272 aa).

S122 (schiff-base intermediate with substrate; via pyruvic acid) is an active-site residue. S122 carries the post-translational modification Pyruvic acid (Ser); by autocatalysis. H127 (proton acceptor; for processing activity) is an active-site residue. The active-site Proton donor; for catalytic activity is the C150.

The protein belongs to the prokaryotic AdoMetDC family. Type 2 subfamily. Heterooctamer of four alpha and four beta chains arranged as a tetramer of alpha/beta heterodimers. Pyruvate is required as a cofactor. In terms of processing, is synthesized initially as an inactive proenzyme. Formation of the active enzyme involves a self-maturation process in which the active site pyruvoyl group is generated from an internal serine residue via an autocatalytic post-translational modification. Two non-identical subunits are generated from the proenzyme in this reaction, and the pyruvate is formed at the N-terminus of the alpha chain, which is derived from the carboxyl end of the proenzyme. The post-translation cleavage follows an unusual pathway, termed non-hydrolytic serinolysis, in which the side chain hydroxyl group of the serine supplies its oxygen atom to form the C-terminus of the beta chain, while the remainder of the serine residue undergoes an oxidative deamination to produce ammonia and the pyruvoyl group blocking the N-terminus of the alpha chain.

It carries out the reaction S-adenosyl-L-methionine + H(+) = S-adenosyl 3-(methylsulfanyl)propylamine + CO2. Its pathway is amine and polyamine biosynthesis; S-adenosylmethioninamine biosynthesis; S-adenosylmethioninamine from S-adenosyl-L-methionine: step 1/1. Functionally, catalyzes the decarboxylation of S-adenosylmethionine to S-adenosylmethioninamine (dcAdoMet), the propylamine donor required for the synthesis of the polyamines spermine and spermidine from the diamine putrescine. The polypeptide is S-adenosylmethionine decarboxylase proenzyme (Clostridium botulinum (strain Eklund 17B / Type B)).